Reading from the N-terminus, the 258-residue chain is Imidazole glycerol phosphate synthase subunit HisF (258 aa).

Active-site residues include Asp-11 and Asp-130.

Belongs to the HisA/HisF family. As to quaternary structure, heterodimer of HisH and HisF.

Its subcellular location is the cytoplasm. It carries out the reaction 5-[(5-phospho-1-deoxy-D-ribulos-1-ylimino)methylamino]-1-(5-phospho-beta-D-ribosyl)imidazole-4-carboxamide + L-glutamine = D-erythro-1-(imidazol-4-yl)glycerol 3-phosphate + 5-amino-1-(5-phospho-beta-D-ribosyl)imidazole-4-carboxamide + L-glutamate + H(+). Its pathway is amino-acid biosynthesis; L-histidine biosynthesis; L-histidine from 5-phospho-alpha-D-ribose 1-diphosphate: step 5/9. Its function is as follows. IGPS catalyzes the conversion of PRFAR and glutamine to IGP, AICAR and glutamate. The HisF subunit catalyzes the cyclization activity that produces IGP and AICAR from PRFAR using the ammonia provided by the HisH subunit. The chain is Imidazole glycerol phosphate synthase subunit HisF from Blochmanniella pennsylvanica (strain BPEN).